The sequence spans 373 residues: ATP phosphoribosyltransferase regulatory subunit (373 aa).

The protein belongs to the class-II aminoacyl-tRNA synthetase family. HisZ subfamily. Heteromultimer composed of HisG and HisZ subunits.

The protein resides in the cytoplasm. It functions in the pathway amino-acid biosynthesis; L-histidine biosynthesis; L-histidine from 5-phospho-alpha-D-ribose 1-diphosphate: step 1/9. Its function is as follows. Required for the first step of histidine biosynthesis. May allow the feedback regulation of ATP phosphoribosyltransferase activity by histidine. The polypeptide is ATP phosphoribosyltransferase regulatory subunit (Rhizobium johnstonii (strain DSM 114642 / LMG 32736 / 3841) (Rhizobium leguminosarum bv. viciae)).